The sequence spans 491 residues: Trigger factor (491 aa).

In terms of domain architecture, PPIase FKBP-type spans 173 to 260 (GDVAVVSFSG…LDELKGRELP (88 aa)). The interval 435–491 (MVDPASEDKPAKASKAKSSKAKAEKEPAAEGQAKAKPAAKTSKSKTKAAEKLITPID) is disordered. Residues 463–475 (AEGQAKAKPAAKT) are compositionally biased toward low complexity.

Belongs to the FKBP-type PPIase family. Tig subfamily.

The protein resides in the cytoplasm. The enzyme catalyses [protein]-peptidylproline (omega=180) = [protein]-peptidylproline (omega=0). In terms of biological role, involved in protein export. Acts as a chaperone by maintaining the newly synthesized protein in an open conformation. Functions as a peptidyl-prolyl cis-trans isomerase. This Synechococcus sp. (strain RCC307) protein is Trigger factor.